The primary structure comprises 360 residues: Dual-specificity RNA methyltransferase RlmN (360 aa).

E91 (proton acceptor) is an active-site residue. A Radical SAM core domain is found at 110–343 (RSEKYTVCIS…CTIRESKGLD (234 aa)). C117 and C348 are joined by a disulfide. The [4Fe-4S] cluster site is built by C124, C128, and C131. S-adenosyl-L-methionine is bound by residues 174–175 (GE), S206, 229–231 (SLH), and N305. C348 (S-methylcysteine intermediate) is an active-site residue.

The protein belongs to the radical SAM superfamily. RlmN family. It depends on [4Fe-4S] cluster as a cofactor.

The protein localises to the cytoplasm. The enzyme catalyses adenosine(2503) in 23S rRNA + 2 reduced [2Fe-2S]-[ferredoxin] + 2 S-adenosyl-L-methionine = 2-methyladenosine(2503) in 23S rRNA + 5'-deoxyadenosine + L-methionine + 2 oxidized [2Fe-2S]-[ferredoxin] + S-adenosyl-L-homocysteine. The catalysed reaction is adenosine(37) in tRNA + 2 reduced [2Fe-2S]-[ferredoxin] + 2 S-adenosyl-L-methionine = 2-methyladenosine(37) in tRNA + 5'-deoxyadenosine + L-methionine + 2 oxidized [2Fe-2S]-[ferredoxin] + S-adenosyl-L-homocysteine. Functionally, specifically methylates position 2 of adenine 2503 in 23S rRNA and position 2 of adenine 37 in tRNAs. m2A2503 modification seems to play a crucial role in the proofreading step occurring at the peptidyl transferase center and thus would serve to optimize ribosomal fidelity. This chain is Dual-specificity RNA methyltransferase RlmN, found in Aliarcobacter butzleri (strain RM4018) (Arcobacter butzleri).